We begin with the raw amino-acid sequence, 305 residues long: MMSNENFDNDYNLPPPNDSAEDLKIFIERYERSVDSTLLEIDENKREALEKNILRKDRKMKYEIECNERLQGWKKLAIEREISEEQSGEVQFPRWIDEWANTKLGGIFERIFSKMDSMQNDMNSRFDAMQNEMTSMKGEMAEMKVEMVEMKRETIRLNTRIDLLEQKTEARFQSIEQRFNSIDQRFDSMEQRLDSMDQKMETIDARSCRSIMLTRKLENATRSDQGYLASPVPFLNGNEPVSSGLPPIERVEDIDELSKEQCVQYLKGYGITFSPAETIKLKKRLRDTVGLWSKASTEYEFHQFH.

Coiled coils occupy residues Ile-27–Glu-63 and Asn-120–Ser-207.

Belongs to the UPF0612 family.

In Schizosaccharomyces pombe (strain 972 / ATCC 24843) (Fission yeast), this protein is UPF0612 protein C337.02c.